Reading from the N-terminus, the 892-residue chain is Translation initiation factor IF-2 (892 aa).

2 disordered regions span residues 32–102 and 114–300; these read LAQA…PGDA and KAPE…KQAE. The span at 35–48 shows a compositional bias: polar residues; sequence AGSSDTKNSPASKA. Positions 139–166 are enriched in basic and acidic residues; the sequence is QEEKKESSEETSPERVEETLIIRTRTEP. Low complexity predominate over residues 200–211; it reads AASTEETTQQQP. The segment covering 212 to 224 has biased composition (polar residues); that stretch reads RQNDAASYNNKQQ. A compositionally biased stretch (low complexity) spans 225-238; sequence PSGTSSRPASSAPS. A compositionally biased stretch (basic and acidic residues) spans 252-276; it reads RGSERDRSKRSDESVKAFTGRDRYG. In terms of domain architecture, tr-type G spans 397-566; the sequence is IRSPIVAFMG…ALQAEVLELK (170 aa). The tract at residues 406–413 is G1; it reads GHVDHGKT. Position 406-413 (406-413) interacts with GTP; sequence GHVDHGKT. The G2 stretch occupies residues 431-435; the sequence is AITQH. The G3 stretch occupies residues 452–455; it reads DTPG. GTP is bound by residues 452 to 456 and 506 to 509; these read DTPGH and NKCD. The tract at residues 506–509 is G4; the sequence is NKCD. Positions 542 to 544 are G5; the sequence is SAK.

The protein belongs to the TRAFAC class translation factor GTPase superfamily. Classic translation factor GTPase family. IF-2 subfamily.

It is found in the cytoplasm. Its function is as follows. One of the essential components for the initiation of protein synthesis. Protects formylmethionyl-tRNA from spontaneous hydrolysis and promotes its binding to the 30S ribosomal subunits. Also involved in the hydrolysis of GTP during the formation of the 70S ribosomal complex. The protein is Translation initiation factor IF-2 of Chlamydia trachomatis serovar A (strain ATCC VR-571B / DSM 19440 / HAR-13).